A 520-amino-acid polypeptide reads, in one-letter code: Zinc finger and BTB domain-containing protein 45 (520 aa).

A BTB domain is found at Cys-33–Gln-96. Disordered regions lie at residues Pro-182–Gly-272 and Phe-337–Ala-372. Positions Arg-206–Glu-225 are enriched in acidic residues. Residues Pro-342–Phe-363 are compositionally biased toward pro residues. 4 C2H2-type zinc fingers span residues Tyr-412–His-434, His-440–His-462, Phe-468–His-490, and Ala-495–His-517.

It belongs to the krueppel C2H2-type zinc-finger protein family.

Its subcellular location is the nucleus. May be involved in transcriptional regulation. In the central nervous system, may play a role in glial cell differentiation. The chain is Zinc finger and BTB domain-containing protein 45 from Mus musculus (Mouse).